Reading from the N-terminus, the 296-residue chain is Decaprenyl diphosphate synthase (296 aa).

The segment at 1–58 is disordered; that stretch reads MVRNERTLKSTDFPQLPPAPDDYPTFPDKSTWPVVFPMLPPSPDGGPRRPPQHTSKAV. The active site involves D76. D76 serves as a coordination point for Mg(2+). Substrate-binding positions include 77–80, W81, R89, H93, and 121–123; these read GNGR and STE. N124 (proton acceptor) is an active-site residue. Substrate is bound by residues W125, R127, R244, and 250-252; that span reads RSS. E263 provides a ligand contact to Mg(2+).

The protein belongs to the UPP synthase family. Homodimer. Requires Mg(2+) as cofactor.

It is found in the cell membrane. The catalysed reaction is (2Z,6E)-farnesyl diphosphate + 7 isopentenyl diphosphate = (2Z,6Z,10Z,14Z,18Z,22Z,26Z,30Z,34E)-decaprenyl diphosphate + 7 diphosphate. It catalyses the reaction n isopentenyl diphosphate + (2E,6E)-farnesyl diphosphate = a di-trans,poly-cis-polyprenyl diphosphate + n diphosphate. Functionally, catalyzes the sequential condensation of isopentenyl diphosphate (IPP) in the cis configuration with (2Z,6E)-farnesyl diphosphate (Z-FPP or EZ-FPP) generating the 50 carbon product trans,polycis-decaprenyl diphosphate. When (2E,6E)-farnesyl diphosphate (E-FPP or EE-FPP) is used in vitro, both primary products decaprenyl diphosphate and (2E,6E,10E)-geranylgeranyl diphosphate (EEE-GGPP) are synthesized. M.tuberculosis does not synthesize (2E,6E,10Z)-geranylgeranyl diphosphate (EEZ-GGPP) and heptaprenyl diphosphate. Can also accept many different allylic substrates, including E-geranyl diphosphate (E-GPP), neryl diphosphate (NPP), and all-trans-geranyl-geranyl diphosphate. In Mycobacterium leprae (strain TN), this protein is Decaprenyl diphosphate synthase (uppS).